Consider the following 251-residue polypeptide: SNAP25 homologous protein SNAP29 (251 aa).

Residues Met-1–Gln-52 are disordered. Residues Thr-40–Gln-52 show a composition bias toward polar residues. One can recognise a t-SNARE coiled-coil homology domain in the interval Lys-186–Leu-248.

It belongs to the SNAP-25 family.

The protein resides in the membrane. Its subcellular location is the cytoplasm. Its function is as follows. SNAREs, soluble N-ethylmaleimide-sensitive factor-attachment protein receptors, are essential proteins for fusion of cellular membranes. SNAREs localized on opposing membranes assemble to form a trans-SNARE complex, an extended, parallel four alpha-helical bundle that drives membrane fusion. In Arabidopsis thaliana (Mouse-ear cress), this protein is SNAP25 homologous protein SNAP29 (SNAP29).